Reading from the N-terminus, the 469-residue chain is ABHD16B (469 aa).

Residues 174–298 (VICCEGNAGF…GLVVRTVREH (125 aa)) enclose the AB hydrolase-1 domain. Residues Ser-247, Asp-322, and His-418 each act as charge relay system in the active site.

This sequence belongs to the AB hydrolase superfamily. ABHD16 family.

It catalyses the reaction a 1,2-diacyl-sn-glycero-3-phospho-L-serine + H2O = a 2-acyl-sn-glycero-3-phospho-L-serine + a fatty acid + H(+). The enzyme catalyses a 1-acylglycerol + H2O = glycerol + a fatty acid + H(+). It carries out the reaction 1-(9Z-octadecenoyl)-glycerol + H2O = glycerol + (9Z)-octadecenoate + H(+). Hydrolyzes the sn-1 position of glycerophospholipids with high specificity towards phosphatidylserine (PS), PS-PLA1 enzyme. Also hydrolyzes the acyl chain of glycerolipids with a preference for the monoacylglycerol (MAG) 1-acylglycerol, MAG lipase. Plays a regulatory role in cellular lipid homeostasis by modulating genes involved in neutral lipid degradation and in phospholipid synthesis and composition. The protein is ABHD16B of Homo sapiens (Human).